A 1211-amino-acid chain; its full sequence is DNA-directed RNA polymerase subunit beta' (1211 aa).

4 residues coordinate Zn(2+): Cys60, Cys62, Cys75, and Cys78. 3 residues coordinate Mg(2+): Asp450, Asp452, and Asp454. Positions 819, 893, 900, and 903 each coordinate Zn(2+).

This sequence belongs to the RNA polymerase beta' chain family. As to quaternary structure, the RNAP catalytic core consists of 2 alpha, 1 beta, 1 beta' and 1 omega subunit. When a sigma factor is associated with the core the holoenzyme is formed, which can initiate transcription. Requires Mg(2+) as cofactor. The cofactor is Zn(2+).

The catalysed reaction is RNA(n) + a ribonucleoside 5'-triphosphate = RNA(n+1) + diphosphate. Its function is as follows. DNA-dependent RNA polymerase catalyzes the transcription of DNA into RNA using the four ribonucleoside triphosphates as substrates. The protein is DNA-directed RNA polymerase subunit beta' of Streptococcus equi subsp. equi (strain 4047).